We begin with the raw amino-acid sequence, 262 residues long: Acyl-[acyl-carrier-protein]--UDP-N-acetylglucosamine O-acyltransferase (262 aa).

It belongs to the transferase hexapeptide repeat family. LpxA subfamily. As to quaternary structure, homotrimer.

It is found in the cytoplasm. The catalysed reaction is a (3R)-hydroxyacyl-[ACP] + UDP-N-acetyl-alpha-D-glucosamine = a UDP-3-O-[(3R)-3-hydroxyacyl]-N-acetyl-alpha-D-glucosamine + holo-[ACP]. The protein operates within glycolipid biosynthesis; lipid IV(A) biosynthesis; lipid IV(A) from (3R)-3-hydroxytetradecanoyl-[acyl-carrier-protein] and UDP-N-acetyl-alpha-D-glucosamine: step 1/6. Involved in the biosynthesis of lipid A, a phosphorylated glycolipid that anchors the lipopolysaccharide to the outer membrane of the cell. This chain is Acyl-[acyl-carrier-protein]--UDP-N-acetylglucosamine O-acyltransferase, found in Burkholderia thailandensis (strain ATCC 700388 / DSM 13276 / CCUG 48851 / CIP 106301 / E264).